Here is an 856-residue protein sequence, read N- to C-terminus: DNA mismatch repair protein MutS (856 aa).

615–622 (GPNMGGKS) is an ATP binding site. The span at 798–807 (ETTGHQQAIK) shows a compositional bias: polar residues. Residues 798–817 (ETTGHQQAIKNPSKAPREEQ) form a disordered region.

Belongs to the DNA mismatch repair MutS family.

This protein is involved in the repair of mismatches in DNA. It is possible that it carries out the mismatch recognition step. This protein has a weak ATPase activity. This is DNA mismatch repair protein MutS from Photobacterium profundum (strain SS9).